Consider the following 523-residue polypeptide: MTKGIDKYSIDSTDYTVGQDNVQKWGFDVHNPVFGISAGFIALFLVAALVLDAHTAKTALDGLKWKIIGSFDWLFIIAGNIFVIFCLALIVSPLGKIRLGGKDAVADYSFMSWLAMLFAAGMGIGLMFWSVAEPVAYFTGWYETPLGVEANSPEAARLALGATMFHWGLHPWAIYGVVALSLAFFTYNKGLPLSMRSIFYPLLGDRAWGWAGHIVDILAVLATLFGLATSLGLGAQQAASGIHHVFGVEPGLGLQIVVITVVTLLAVVSVVRGIDGGVKVISNINMVVAFLLLILVGLIGWAASLGSIPTTLMAYVENIIPLSNPFGRTDEAWFQGWTVFYWAWWISWSPFVGMFIARVSRGRTVREFITAVLIVPTVVTVVWMSVFGGLAIDQVVNKVGELGANGLTDVSLAMFQMFDVLPFGNILSIIAVVLVLVFFITSSDSGSLVIDSITAGGKVDAPVLQRVFWAFMEGAIAVALLWIGGSEAVQALQAGAISTALPFTFILLAMCVSLLMGMKTERQ.

Transmembrane regions (helical) follow at residues 33–53 (VFGI…VLDA), 71–91 (FDWL…ALIV), 109–129 (SFMS…LMFW), 165–185 (FHWG…LAFF), 214–234 (IVDI…LGLG), 251–271 (GLGL…VSVV), 286–306 (MVVA…ASLG), 337–357 (WTVF…MFIA), 372–392 (VLIV…GLAI), 420–440 (VLPF…VFFI), 467–487 (VFWA…GGSE), and 496–516 (AIST…SLLM).

This sequence belongs to the BCCT transporter (TC 2.A.15) family.

It is found in the cell inner membrane. Functionally, involved in the uptake of the osmoprotectant glycine betaine. In Vibrio parahaemolyticus serotype O3:K6 (strain RIMD 2210633), this protein is Glycine betaine transporter 1.